The following is a 236-amino-acid chain: Small ribosomal subunit protein uS3 (236 aa).

The KH type-2 domain occupies 39 to 107; sequence IREVLEKQLK…EVHLNIVEVR (69 aa). The interval 214-236 is disordered; the sequence is ASERRALEGGDSGGGRSRRDDRG.

The protein belongs to the universal ribosomal protein uS3 family. In terms of assembly, part of the 30S ribosomal subunit. Forms a tight complex with proteins S10 and S14.

Its function is as follows. Binds the lower part of the 30S subunit head. Binds mRNA in the 70S ribosome, positioning it for translation. The protein is Small ribosomal subunit protein uS3 of Parvibaculum lavamentivorans (strain DS-1 / DSM 13023 / NCIMB 13966).